The sequence spans 1509 residues: Myosin-2 heavy chain, non muscle (1509 aa).

A Myosin N-terminal SH3-like domain is found at 32-85 (SDKTLAWWPTKDADRAFCHVEVTKDDGKNFTVRLENGEEKSQPKNEKNFLGVNP). The region spanning 89-787 (DGVEDMGELG…QLAAIEELRE (699 aa)) is the Myosin motor domain. Residue Lys133 is modified to N6,N6,N6-trimethyllysine. 182 to 189 (GESGAGKT) serves as a coordination point for ATP. A disordered region spans residues 623–643 (APAEEEKAAAGGSRNRSTGRG). 2 actin-binding regions span residues 660-682 (LAHL…IPNL) and 766-780 (RFGV…GQLA). In terms of domain architecture, IQ spans 790 to 819 (ISKMVVSIQAGARAFLARRMYDKMREQTVS). The interval 848-1226 (LISQRNFQKE…AERDSGAQQR (379 aa)) is alpha-helical tailpiece (S2). A coiled-coil region spans residues 848–1509 (LISQRNFQKE…VRAGSARAEE (662 aa)). Composition is skewed to basic and acidic residues over residues 958 to 1019 (ELKA…KDAL), 1034 to 1047 (KNTE…RNEL), 1097 to 1107 (EDARSEVDSLK), 1115 to 1141 (KSLK…RANV), and 1179 to 1189 (QVDETKRRLEE). Disordered stretches follow at residues 958–1049 (ELKA…ELDD), 1068–1141 (LAQT…RANV), 1170–1195 (AAQA…ASAA), 1213–1259 (ADLD…RLEG), 1352–1425 (VAKE…NREL), and 1474–1509 (QLQD…RAEE). A hinge region spans residues 1227–1252 (RKLNTRISELQSELENAPKTGGASSE). Polar residues predominate over residues 1231-1240 (TRISELQSEL). An alpha-helical tailpiece (LMM) region spans residues 1253-1482 (EVKRLEGELE…AQLQDEIDGT (230 aa)). Residues 1253–1509 (EVKRLEGELE…VRAGSARAEE (257 aa)) form a light meromyosin (LMM) region. Positions 1483 to 1509 (PSSRGGSTRGASARGASVRAGSARAEE) are nonhelical tailpiece. The span at 1484 to 1509 (SSRGGSTRGASARGASVRAGSARAEE) shows a compositional bias: low complexity. Residues Ser1489, Ser1494, and Ser1499 each carry the phosphoserine modification.

Belongs to the TRAFAC class myosin-kinesin ATPase superfamily. Myosin family. In terms of assembly, myosin II heavy chain is two-headed. It self-assembles into filaments. Hexamer of 2 heavy chain subunits (MHC), 2 alkali light chain subunits (MLC) and 2 regulatory light chain subunits (MLC-2).

Myosin is a protein that binds to F-actin and has ATPase activity that is activated by F-actin. The protein is Myosin-2 heavy chain, non muscle of Acanthamoeba castellanii (Amoeba).